A 100-amino-acid polypeptide reads, in one-letter code: Large ribosomal subunit protein uL23 (100 aa).

This sequence belongs to the universal ribosomal protein uL23 family. In terms of assembly, part of the 50S ribosomal subunit. Contacts protein L29, and trigger factor when it is bound to the ribosome.

One of the early assembly proteins it binds 23S rRNA. One of the proteins that surrounds the polypeptide exit tunnel on the outside of the ribosome. Forms the main docking site for trigger factor binding to the ribosome. This Escherichia coli O157:H7 protein is Large ribosomal subunit protein uL23.